Here is an 80-residue protein sequence, read N- to C-terminus: Large ribosomal subunit protein bL28 (80 aa).

The disordered stretch occupies residues 1 to 23; that stretch reads MARVCQITGKKTRTGNNVSHANN.

It belongs to the bacterial ribosomal protein bL28 family.

The protein is Large ribosomal subunit protein bL28 of Cytophaga hutchinsonii (strain ATCC 33406 / DSM 1761 / CIP 103989 / NBRC 15051 / NCIMB 9469 / D465).